A 1342-amino-acid chain; its full sequence is DNA-directed RNA polymerase subunit beta (1342 aa).

N6-acetyllysine occurs at positions 1022 and 1200.

Belongs to the RNA polymerase beta chain family. As to quaternary structure, the RNAP catalytic core consists of 2 alpha, 1 beta, 1 beta' and 1 omega subunit. When a sigma factor is associated with the core the holoenzyme is formed, which can initiate transcription.

It carries out the reaction RNA(n) + a ribonucleoside 5'-triphosphate = RNA(n+1) + diphosphate. DNA-dependent RNA polymerase catalyzes the transcription of DNA into RNA using the four ribonucleoside triphosphates as substrates. This Escherichia coli O81 (strain ED1a) protein is DNA-directed RNA polymerase subunit beta.